The chain runs to 214 residues: uncharacterized protein (214 aa).

This is an uncharacterized protein from Methanocaldococcus jannaschii (strain ATCC 43067 / DSM 2661 / JAL-1 / JCM 10045 / NBRC 100440) (Methanococcus jannaschii).